The following is a 69-amino-acid chain: Putative membrane protein insertion efficiency factor (69 aa).

Belongs to the UPF0161 family.

It is found in the cell inner membrane. Functionally, could be involved in insertion of integral membrane proteins into the membrane. In Syntrophotalea carbinolica (strain DSM 2380 / NBRC 103641 / GraBd1) (Pelobacter carbinolicus), this protein is Putative membrane protein insertion efficiency factor.